Here is a 489-residue protein sequence, read N- to C-terminus: uncharacterized protein (489 aa).

A run of 12 helical transmembrane segments spans residues 14-34 (LLFV…ISLF), 36-56 (LGPF…IVTL), 100-120 (IIGP…FSGI), 127-147 (LVNT…LAFI), 158-178 (LIAL…IVAI), 203-223 (EISF…YAGV), 241-261 (ILIV…IILN), 286-306 (AAGL…NVST), 344-364 (IWFT…IPLV), 380-400 (VGSA…FKFI), 419-439 (LFCL…FPVI), and 449-469 (HTLT…LFLL).

To M.genitalium MG226.

Its subcellular location is the cell membrane. This is an uncharacterized protein from Mycoplasma genitalium (strain ATCC 33530 / DSM 19775 / NCTC 10195 / G37) (Mycoplasmoides genitalium).